The following is a 209-amino-acid chain: Orotate phosphoribosyltransferase (209 aa).

5-phospho-alpha-D-ribose 1-diphosphate is bound by residues arginine 96, lysine 100, histidine 102, and 122-130 (EDLISTGGS). Serine 126 lines the orotate pocket.

This sequence belongs to the purine/pyrimidine phosphoribosyltransferase family. PyrE subfamily. In terms of assembly, homodimer. It depends on Mg(2+) as a cofactor.

The enzyme catalyses orotidine 5'-phosphate + diphosphate = orotate + 5-phospho-alpha-D-ribose 1-diphosphate. Its pathway is pyrimidine metabolism; UMP biosynthesis via de novo pathway; UMP from orotate: step 1/2. Its function is as follows. Catalyzes the transfer of a ribosyl phosphate group from 5-phosphoribose 1-diphosphate to orotate, leading to the formation of orotidine monophosphate (OMP). This is Orotate phosphoribosyltransferase from Streptococcus agalactiae serotype III (strain NEM316).